We begin with the raw amino-acid sequence, 262 residues long: Probable carboxylesterase Culp3 (262 aa).

The N-terminal stretch at 1–41 (MNNRPIRLLTSGRAGLGAGALITAVVLLIALGAVWTLVAFA) is a signal peptide. An intrachain disulfide couples Cys-44 to Cys-114. Ser-125 acts as the Nucleophile in catalysis. Residues Cys-188 and Cys-195 are joined by a disulfide bond. Asp-192 is a catalytic residue. Catalysis depends on His-206, which acts as the Proton donor/acceptor. Residues 241–262 (LPGSVLQMPGTAAPAPESLHGR) are disordered.

This sequence belongs to the cutinase family.

Its subcellular location is the secreted. This chain is Probable carboxylesterase Culp3 (cut3), found in Mycobacterium tuberculosis (strain CDC 1551 / Oshkosh).